The following is a 285-amino-acid chain: Pantothenate synthetase (285 aa).

ATP is bound at residue 30–37 (MGNLHDGH). The active-site Proton donor is His-37. Gln-61 contributes to the (R)-pantoate binding site. Gln-61 lines the beta-alanine pocket. 149-152 (GEKD) serves as a coordination point for ATP. Gln-155 contributes to the (R)-pantoate binding site. Residues Ile-178 and 186–189 (LSSR) each bind ATP.

Belongs to the pantothenate synthetase family. In terms of assembly, homodimer.

Its subcellular location is the cytoplasm. The enzyme catalyses (R)-pantoate + beta-alanine + ATP = (R)-pantothenate + AMP + diphosphate + H(+). The protein operates within cofactor biosynthesis; (R)-pantothenate biosynthesis; (R)-pantothenate from (R)-pantoate and beta-alanine: step 1/1. In terms of biological role, catalyzes the condensation of pantoate with beta-alanine in an ATP-dependent reaction via a pantoyl-adenylate intermediate. This chain is Pantothenate synthetase, found in Buchnera aphidicola subsp. Acyrthosiphon pisum (strain 5A).